A 129-amino-acid polypeptide reads, in one-letter code: Glycine cleavage system H protein (129 aa).

The Lipoyl-binding domain maps to 24–106 (TFTVGITEHA…FGDGWLFRIK (83 aa)). Residue K65 is modified to N6-lipoyllysine.

The protein belongs to the GcvH family. In terms of assembly, the glycine cleavage system is composed of four proteins: P, T, L and H. (R)-lipoate serves as cofactor.

Its function is as follows. The glycine cleavage system catalyzes the degradation of glycine. The H protein shuttles the methylamine group of glycine from the P protein to the T protein. The sequence is that of Glycine cleavage system H protein from Pseudoalteromonas translucida (strain TAC 125).